A 314-amino-acid polypeptide reads, in one-letter code: tRNA-cytidine(32) 2-sulfurtransferase (314 aa).

The PP-loop motif signature appears at 57–62 (SGGKDS). Residues Cys-132, Cys-135, and Cys-223 each contribute to the [4Fe-4S] cluster site.

This sequence belongs to the TtcA family. In terms of assembly, homodimer. Requires Mg(2+) as cofactor. It depends on [4Fe-4S] cluster as a cofactor.

It is found in the cytoplasm. It carries out the reaction cytidine(32) in tRNA + S-sulfanyl-L-cysteinyl-[cysteine desulfurase] + AH2 + ATP = 2-thiocytidine(32) in tRNA + L-cysteinyl-[cysteine desulfurase] + A + AMP + diphosphate + H(+). Its pathway is tRNA modification. Its function is as follows. Catalyzes the ATP-dependent 2-thiolation of cytidine in position 32 of tRNA, to form 2-thiocytidine (s(2)C32). The sulfur atoms are provided by the cysteine/cysteine desulfurase (IscS) system. The chain is tRNA-cytidine(32) 2-sulfurtransferase from Alkalilimnicola ehrlichii (strain ATCC BAA-1101 / DSM 17681 / MLHE-1).